A 579-amino-acid chain; its full sequence is Cytochrome P450 monooxygenase prx9 (579 aa).

A helical membrane pass occupies residues leucine 6 to valine 25. 3 N-linked (GlcNAc...) asparagine glycosylation sites follow: asparagine 194, asparagine 292, and asparagine 390. Residue cysteine 512 coordinates heme.

Belongs to the cytochrome P450 family. It depends on heme as a cofactor.

Its subcellular location is the membrane. The protein operates within sesquiterpene biosynthesis. Its function is as follows. Cytochrome P450 monooxygenase; part of the gene cluster that mediates the biosynthesis of PR-toxin, a bicyclic sesquiterpene belonging to the eremophilane class and acting as a mycotoxin. The first step of the pathway is catalyzed by the aristolochene synthase which performs the cyclization of trans,trans-farnesyl diphosphate (FPP) to the bicyclic sesquiterpene aristolochene. Following the formation of aristolochene, the non-oxygenated aristolochene is converted to the trioxygenated intermediate eremofortin B, via 7-epi-neopetasone. This conversion appears to involve three enzymes, a hydroxysterol oxidase-like enzyme, the quinone-oxidase prx3 that forms the quinone-type-structure in the bicyclic nucleus of aristolochene with the C8-oxo group and the C-3 hydroxyl group, and the P450 monooxygenase prx9 that introduces the epoxide at the double bond between carbons 1 and 2. No monoxy or dioxy-intermediates have been reported to be released to the broth, so these three early oxidative reactions may be coupled together. Eremofortin B is further oxidized by another P450 monooxygenase, that introduces a second epoxide between carbons 7 and 11 prior to acetylation to eremofortin A by the acetyltransferase prx11. The second epoxidation may be performed by a second P450 monooxygenase. After the acetylation step, eremofortin A is converted to eremofortin C and then to PR-toxin. First the conversion of eremofortin A to eremofortin C proceeds by oxidation of the side chain of the molecule at C-12 and is catalyzed by the short-chain oxidoreductase prx1. The cytochrome P450 monooxygenase prx8 also plays a role in this step. The primary alcohol formed at C-12 is finally oxidized by the short-chain alcohol dehydrogenase prx4 that forms PR-toxin. In Penicillium rubens (strain ATCC 28089 / DSM 1075 / NRRL 1951 / Wisconsin 54-1255) (Penicillium chrysogenum), this protein is Cytochrome P450 monooxygenase prx9.